The chain runs to 185 residues: MLKAKILFVGPCESGKTVLANFLTESSDITEYNPTQGVRILEFENPHVTSNNKGTGCEFELWDCGGDSKFESCWPALMKDAHGVVIVFNADIPSHLKEIEMWYSCFVQQQFLQDSHCMLVAHHKPGSGGDKSNLALSPPLNKLKLVHSNLEEDPEEVRVEFIKYLKSIINSMSESRDREEMLIIT.

Residues 10-17 (GPCESGKT), 63-67 (DCGGD), and 123-126 (HKPG) each bind GTP. Serine 137 carries the phosphoserine modification.

Belongs to the small GTPase superfamily. Rab family. Component of the IFT complex B, at least composed of IFT20, IFT22, IFT25, IFT27, IFT46, IFT52, TRAF3IP1/IFT54, IFT57, IFT74, IFT80, IFT81, and IFT88. Interacts with IFT88. Interacts with CFAP61.

The protein localises to the cell projection. The protein resides in the cilium. Small GTPase-like component of the intraflagellar transport (IFT) complex B. The sequence is that of Intraflagellar transport protein 22 homolog (Ift22) from Rattus norvegicus (Rat).